Consider the following 425-residue polypeptide: Proteinase-activated receptor 1 (425 aa).

Positions 1 to 21 are cleaved as a signal peptide; it reads MGPRRLLLVAACLCLCGPLLS. The propeptide at 22–41 is removed for receptor activation; it reads ARTRARRPASKATNATLDPR. 3 N-linked (GlcNAc...) asparagine glycosylation sites follow: Asn-35, Asn-62, and Asn-75. The Extracellular portion of the chain corresponds to 42–102; it reads SFLLRNPNDK…SGYLTSSWLT (61 aa). The helical transmembrane segment at 103–128 threads the bilayer; sequence LFVPSVYTGVFVVSLPVNIMAIVVFI. The Cytoplasmic portion of the chain corresponds to 129–137; that stretch reads LKMKVKKPA. The chain crosses the membrane as a helical span at residues 138–157; that stretch reads VVYMLHLATADVLFVSVLPF. Topologically, residues 158–176 are extracellular; that stretch reads KISYYLSGSDWQFGSELCR. Cys-175 and Cys-254 are disulfide-bonded. Residues 177–198 traverse the membrane as a helical segment; it reads FVTAAFYCNMYASILLMTVISI. Over 199–218 the chain is Cytoplasmic; that stretch reads DRFLAVVYPMQSLSWRTLGR. Residues 219–239 form a helical membrane-spanning segment; the sequence is ASFTCLAIWALAIAGVVPLLL. The Extracellular portion of the chain corresponds to 240 to 268; it reads KEQTIQVPGLNITTCHDVLNETLLEGYYA. 2 N-linked (GlcNAc...) asparagine glycosylation sites follow: Asn-250 and Asn-259. A helical membrane pass occupies residues 269 to 288; that stretch reads YYFSAFSAVFFFVPLIISTV. The Cytoplasmic portion of the chain corresponds to 289 to 311; sequence CYVSIIRCLSSSTVANRSKKSRA. Residues 312-334 traverse the membrane as a helical segment; it reads LFLSAAVFCIFIICFGPTNILLI. The Extracellular segment spans residues 335-350; that stretch reads AHYSFLSHTSTTEAAY. A helical membrane pass occupies residues 351-374; that stretch reads FAYLLCVCVSSISCCIDPLIYYYA. Over 375-425 the chain is Cytoplasmic; sequence SSECQRYVYSILCCKESSDPSSSNSSGQLMASKMDTCSSNLNNSIYKKLLT. Ser-418 bears the Phosphoserine mark.

This sequence belongs to the G-protein coupled receptor 1 family. Post-translationally, proteolytic cleavage by thrombin generates a new N-terminus that functions as a tethered ligand. Also proteolytically cleaved by cathepsin CTSG. Cleavage at 41-Arg-|-Ser-42 by CTSG results in receptor activation while cleavage at 55-Phe-|-Trp-56 results in inhibition of receptor activation. Phosphorylated in the C-terminal tail; probably mediating desensitization prior to the uncoupling and internalization of the receptor.

The protein resides in the cell membrane. Its function is as follows. High affinity receptor that binds the activated thrombin, leading to calcium release from intracellular stores. The thrombin-activated receptor signaling pathway is mediated through PTX-insensitive G proteins, activation of phospholipase C resulting in the production of 1D-myo-inositol 1,4,5-trisphosphate (InsP3) which binds to InsP3 receptors causing calcium release from the stores. In astrocytes, the calcium released into the cytosol allows the Ca(2+)-dependent release of L-glutamate into the synaptic cleft through BEST1, that targets the neuronal postsynaptic GRIN2A/NMDAR receptor resulting in the synaptic plasticity regulation. May play a role in platelets activation and in vascular development. Mediates up-regulation of pro-inflammatory cytokines, such as MCP-1/CCL2 and IL6, triggered by coagulation factor Xa (F10) in cardiac fibroblasts and umbilical vein endothelial cells. The polypeptide is Proteinase-activated receptor 1 (Papio hamadryas (Hamadryas baboon)).